We begin with the raw amino-acid sequence, 227 residues long: [D-Ala2]-deltorphins (227 aa).

Residues 1 to 20 form the signal peptide; the sequence is MSFLKKSLLLVLFLGLVSHS. A propeptide spanning residues 21-46 is cleaved from the precursor; the sequence is VCKEEKRETEEENENEEENHEVGSEM. The tract at residues 22-227 is disordered; the sequence is CKEEKRETEE…DVVGGEAKKM (206 aa). Acidic residues predominate over residues 30-39; it reads EEENENEEEN. The residue at position 50 (alanine 50) is a D-alanine (Ala). The propeptide occupies 57 to 75; it reads DTEEKNENEEENQEEGSEM. The span at 62–72 shows a compositional bias: acidic residues; that stretch reads NENEEENQEEG. Residues 73-87 show a composition bias toward basic and acidic residues; the sequence is SEMKRYAFGYPKREP. Alanine 79 carries the post-translational modification D-alanine (Ala). The propeptide occupies 86-104; sequence EPEEENENEEENHEEGSEM. Acidic residues predominate over residues 88–98; that stretch reads EEENENEEENH. Basic and acidic residues predominate over residues 99 to 108; it reads EEGSEMKRYA. Residue alanine 108 is modified to D-alanine (Ala). Position 113 is a glycine amide (glycine 113). A propeptide spanning residues 115-140 is cleaved from the precursor; sequence EAKKMKREPEEENENEEENHEEGSEM. Residues 124–134 are compositionally biased toward acidic residues; the sequence is EEENENEEENH. A compositionally biased stretch (basic and acidic residues) spans 135-144; that stretch reads EEGSEMKRYA. Alanine 144 is modified (D-alanine (Ala)). Glycine 149 is subject to Glycine amide. The propeptide occupies 151–176; that stretch reads EAKKMKREPEEENENEEENHEEGSEM. Acidic residues predominate over residues 160 to 170; sequence EEENENEEENH. The segment covering 171–180 has biased composition (basic and acidic residues); that stretch reads EEGSEMKRYA. The residue at position 180 (alanine 180) is a D-alanine (Ala). Glycine 185 is subject to Glycine amide. A propeptide spanning residues 187 to 212 is cleaved from the precursor; that stretch reads EAKKMKREPEEENENEEENHEEGSEM. Positions 196–206 are enriched in acidic residues; that stretch reads EEENENEEENH. The span at 207 to 216 shows a compositional bias: basic and acidic residues; sequence EEGSEMKRYA. Position 216 is a D-alanine (Ala) (alanine 216). Residue glycine 221 is modified to Glycine amide. Residues 223–227 constitute a propeptide that is removed on maturation; the sequence is EAKKM.

The protein belongs to the frog skin active peptide (FSAP) family. Dermorphin subfamily. In terms of tissue distribution, expressed by the skin glands.

It is found in the secreted. In terms of biological role, deltorphin is a heptapeptide with a very potent opiate-like activity. Has high affinity and selectivity for delta-type opioid receptors. The two dermorphin-like peptides have a similar affinity and selectivity for the mu opioid receptor as dermorphin. This chain is [D-Ala2]-deltorphins, found in Phyllomedusa bicolor (Two-colored leaf frog).